Here is a 120-residue protein sequence, read N- to C-terminus: Fumarate reductase subunit D (120 aa).

Transmembrane regions (helical) follow at residues 25 to 45 (FAML…LGVI), 55 to 75 (VAGF…ISMP), and 100 to 120 (IACY…IFMI).

It belongs to the FrdD family. In terms of assembly, part of an enzyme complex containing four subunits: a flavoprotein (FrdA), an iron-sulfur protein (FrdB), and two hydrophobic anchor proteins (FrdC and FrdD).

It is found in the cell inner membrane. In terms of biological role, anchors the catalytic components of the fumarate reductase complex to the cell membrane, binds quinones. The polypeptide is Fumarate reductase subunit D (Aliivibrio salmonicida (strain LFI1238) (Vibrio salmonicida (strain LFI1238))).